We begin with the raw amino-acid sequence, 239 residues long: Orotidine 5'-phosphate decarboxylase (239 aa).

Substrate-binding positions include D15, K36, 63-72 (DLKFHDIPNT), T127, R189, Q198, G218, and R219. K65 (proton donor) is an active-site residue.

The protein belongs to the OMP decarboxylase family. Type 1 subfamily. Homodimer.

The catalysed reaction is orotidine 5'-phosphate + H(+) = UMP + CO2. It participates in pyrimidine metabolism; UMP biosynthesis via de novo pathway; UMP from orotate: step 2/2. Its function is as follows. Catalyzes the decarboxylation of orotidine 5'-monophosphate (OMP) to uridine 5'-monophosphate (UMP). The polypeptide is Orotidine 5'-phosphate decarboxylase (Prochlorococcus marinus (strain MIT 9515)).